A 143-amino-acid polypeptide reads, in one-letter code: Large ribosomal subunit protein uL15 (143 aa).

2 stretches are compositionally biased toward basic residues: residues 1-13 (MIRK…KMRG) and 23-38 (KKHR…GNAG). Residues 1 to 38 (MIRKSKKITKMRGSRTCGYGEAKKHRGAGHRGGRGNAG) are disordered.

The protein belongs to the universal ribosomal protein uL15 family. Part of the 50S ribosomal subunit.

In terms of biological role, binds to the 23S rRNA. The protein is Large ribosomal subunit protein uL15 of Methanococcus maripaludis (strain C7 / ATCC BAA-1331).